Here is a 419-residue protein sequence, read N- to C-terminus: Heparan-sulfate 6-O-sulfotransferase 3-B (419 aa).

The Cytoplasmic portion of the chain corresponds to 1-7; sequence MNDKPNK. The helical; Signal-anchor for type II membrane protein transmembrane segment at 8-28 threads the bilayer; that stretch reads WIFIPILAILFVMIGYQYVCP. At 29-419 the chain is on the lumenal side; the sequence is AGGQACHFRT…EDYASQVVRW (391 aa). N-linked (GlcNAc...) asparagine glycosylation is present at Asn-77. A 3'-phosphoadenylyl sulfate-binding site is contributed by 101 to 109; the sequence is HIQKTGGTT. Substrate-binding positions include 131 to 132, Arg-148, Trp-153, and His-158; that span reads KK. His-158 (proton acceptor) is an active-site residue. 3'-phosphoadenylyl sulfate contacts are provided by Arg-191 and Ser-199. Positions 203 and 210 each coordinate substrate. 2 N-linked (GlcNAc...) asparagine glycosylation sites follow: Asn-270 and Asn-275. 323-325 lines the 3'-phosphoadenylyl sulfate pocket; the sequence is TQI. Residue Asn-326 is glycosylated (N-linked (GlcNAc...) asparagine). 329 to 330 is a 3'-phosphoadenylyl sulfate binding site; sequence RA. Asn-393 and Asn-402 each carry an N-linked (GlcNAc...) asparagine glycan.

It belongs to the sulfotransferase 6 family. In terms of tissue distribution, in early somitogenesis, expressed in presumptive forebrain and midbrain, tail bud and Kupffer's vesicle. During mid-somitogenesis, ubiquitous expression which is strongest in the somites and eye. During late somitogenesis, predominantly expressed in eye, hindbrain and ventral somites. At 24 hours post-fertilization (hpf), restricted to lens and neural retina, brain, otic vesicle and somites. At 36 hpf, brain expression is restricted to telencephalon. At 48 hpf, restricted to telencephalon and pectoral fin.

Its subcellular location is the membrane. It carries out the reaction alpha-D-glucosaminyl-[heparan sulfate](n) + 3'-phosphoadenylyl sulfate = 6-sulfo-alpha-D-glucosaminyl-[heparan sulfate](n) + adenosine 3',5'-bisphosphate + H(+). 6-O-sulfation enzyme which catalyzes the transfer of sulfate from 3'-phosphoadenosine 5'-phosphosulfate (PAPS) to position 6 of the N-sulfoglucosamine residue (GlcNS) of heparan sulfate. The chain is Heparan-sulfate 6-O-sulfotransferase 3-B from Danio rerio (Zebrafish).